The primary structure comprises 216 residues: Ras-related protein RABE1c (216 aa).

22–29 (GDSGVGKS) is a binding site for GTP. The Effector region motif lies at 44–52 (FITTIGIDF). Residues 70-74 (DTAGQ), 128-131 (NKAD), and 159-160 (SA) contribute to the GTP site. S-geranylgeranyl cysteine attachment occurs at residues cysteine 213 and cysteine 214.

The protein belongs to the small GTPase superfamily. Rab family. As to quaternary structure, interacts with PI5K2.

It is found in the golgi apparatus membrane. It localises to the cell membrane. In terms of biological role, involved in membrane trafficking from the Golgi to the plasma membrane. The chain is Ras-related protein RABE1c (RABE1C) from Arabidopsis thaliana (Mouse-ear cress).